The sequence spans 1215 residues: MAERGQQPPPAKRLCCRPGGGGGGGGSSGGGGGAGGGYSSACRPGPRAGGAAAAAACGGGAALGLLPPGKTQSPESLLDIAARRVAEKWPFQRVEERFERIPEPVQRRIVYWSFPRSEREICMYSSFNTGGGAAGGPGDDSGGGGGAGGGGGGGSSSSPAATSAAATSAAAAAAAAAAAAAAAAGAGAPSVGAAGAADGGDETRLPFRRGIALLESGCVDNVLQVGFHLSGTVTEPAIQSEPETVCNVAISFDRCKITSVTCSCGNKDIFYCAHVVALSLYRIRKPDQVKLHLPISETLFQMNRDQLQKFVQYLITVHHTEVLPTAQKLADEILSQNSEINQVHGAPDPTAGASIDDENCWHLDEEQVQEQVKLFLSQGGYHGSGKQLNLLFAKVREMLKMRDSNGARMLTLITEQFMADPRLSLWRQQGTAMTDKYRQLWDELGALWMCIVLNPHCKLEQKASWLKQLKKWNSVDVCPWEDGNHGSELPNLTNALPQGANANQDSSNRPHRTVFTRAIEACDLHWQDSHLQHIISSDLYTNYCYHDDTENSLFDSRGWPLWHEHVPTACARVDALRSHGYPREALRLAIAIVNTLRRQQQKQLEMFRTQKKELPHKNITSITNLEGWVGHPLDPVGTLFSSLMEACRIDDENLSGFSDFTENMGQCKSLEYQHLPAHKFLEEGESYLTLAVEVALIGLGQQRIMPDGLYTQEKVCRNEEQLISKLQEIELDDTLVKIFRKQAVFLLEAGPYSGLGEIIHRESVPMHTFAKYLFTSLLPHDAELAYKIALRAMRLLVLESTAPSGDLTRPHHIASVVPNRYPRWFTLSHIESQQCELASTMLTAAKGDVRRLETVLESIQKNIHSSSHIFKLAQDAFKIATLMDSLPDITLLKVSLELGLQVMRMTLSTLNWRRREMVRWLVTCATEVGVYALDSIMQTWFTLFTPTEATSIVATTVMSNSTIVRLHLDCHQQEKLASSARTLALQCAMKDPQNCALSALTLCEKDHIAFETAYQIVLDAATTGMSYTQLFTIARYMEHRGYPMRAYKLATLAMTHLNLSYNQDTHPAINDVLWACALSHSLGKNELAAIIPLVVKSVKCATVLSDILRRCTLTTPGMVGLHGRRNSGKLMSLDKAPLRQLLDATIGAYINTTHSRLTHISPRHYSEFIEFLSKARETFLMAHDGHIQFTQFIDNLKQIYKGKKKLMMLVRERFG.

2 disordered regions span residues methionine 1–proline 46 and alanine 133–alanine 161. Gly residues-rich tracts occupy residues proline 18–tyrosine 38 and alanine 133–serine 155. The SWIM-type zinc-finger motif lies at cysteine 246 to isoleucine 283.

Involved in nervous system development, important for striatal morphology and motor regulation. The polypeptide is Zinc finger SWIM domain-containing protein 6 (Homo sapiens (Human)).